The chain runs to 200 residues: Glycerol-3-phosphate acyltransferase (200 aa).

Transmembrane regions (helical) follow at residues 3–23, 50–70, 75–95, 109–129, and 134–154; these read YIYS…FFIA, FYGA…VFLV, IKFM…SIFL, VFLA…LFIV, and YVSL…FFAG.

The protein belongs to the PlsY family. Probably interacts with PlsX.

Its subcellular location is the cell inner membrane. The catalysed reaction is an acyl phosphate + sn-glycerol 3-phosphate = a 1-acyl-sn-glycero-3-phosphate + phosphate. The protein operates within lipid metabolism; phospholipid metabolism. Its function is as follows. Catalyzes the transfer of an acyl group from acyl-phosphate (acyl-PO(4)) to glycerol-3-phosphate (G3P) to form lysophosphatidic acid (LPA). This enzyme utilizes acyl-phosphate as fatty acyl donor, but not acyl-CoA or acyl-ACP. This chain is Glycerol-3-phosphate acyltransferase, found in Thermosipho melanesiensis (strain DSM 12029 / CIP 104789 / BI429).